The sequence spans 74 residues: Exodeoxyribonuclease 7 small subunit (74 aa).

The protein belongs to the XseB family. In terms of assembly, heterooligomer composed of large and small subunits.

It is found in the cytoplasm. It catalyses the reaction Exonucleolytic cleavage in either 5'- to 3'- or 3'- to 5'-direction to yield nucleoside 5'-phosphates.. Its function is as follows. Bidirectionally degrades single-stranded DNA into large acid-insoluble oligonucleotides, which are then degraded further into small acid-soluble oligonucleotides. The sequence is that of Exodeoxyribonuclease 7 small subunit from Ruthia magnifica subsp. Calyptogena magnifica.